Consider the following 161-residue polypeptide: Nucleotide-binding protein Shew185_3601 (161 aa).

Belongs to the YajQ family.

In terms of biological role, nucleotide-binding protein. The sequence is that of Nucleotide-binding protein Shew185_3601 from Shewanella baltica (strain OS185).